The chain runs to 412 residues: MSYIEKIDPDMFEAIQKEADRQEHKLNLIASENYASRAVMEAQGSIMTNKYAEGYSGKRYYGGCDFVDIAENLAIARAKEIFGAKYVNVQPHSGSGANMAVYFSVLQPGDTIMSMDLSHGGHLSHGSPVSFSGKLYNIVPYGVSKETEALDYDELMKMAKECKPKMIVCGASAYPRVIDFKKFREIADEVGAYLLADIAHIAGLVVSGVHPSPVPYADFVTTTTHKTLRGPRGGMIISKTEELAMGVNKAVFPGIQGGPLMHVIAAKAVAFKEAMDEKFRQDQAQTVKNAKVLCACLKEKGFDIVSGGTDNHLMLVNLNNMNITGKDAEAAMSKAGIIANKNTVPFETRSPFITSGVRLGTPACTTRGMKEKEMELIADYIETAIKNAGNDALLSEVSAKVRDLCSRFPVYS.

(6S)-5,6,7,8-tetrahydrofolate contacts are provided by residues L117 and 121 to 123; that span reads GHL. Position 226 is an N6-(pyridoxal phosphate)lysine (K226). (6S)-5,6,7,8-tetrahydrofolate contacts are provided by residues E242 and 350–352; that span reads SPF.

This sequence belongs to the SHMT family. Homodimer. It depends on pyridoxal 5'-phosphate as a cofactor.

The protein resides in the cytoplasm. The enzyme catalyses (6R)-5,10-methylene-5,6,7,8-tetrahydrofolate + glycine + H2O = (6S)-5,6,7,8-tetrahydrofolate + L-serine. Its pathway is one-carbon metabolism; tetrahydrofolate interconversion. It participates in amino-acid biosynthesis; glycine biosynthesis; glycine from L-serine: step 1/1. Its function is as follows. Catalyzes the reversible interconversion of serine and glycine with tetrahydrofolate (THF) serving as the one-carbon carrier. Also exhibits THF-independent aldolase activity toward beta-hydroxyamino acids, producing glycine and aldehydes, via a retro-aldol mechanism. The sequence is that of Serine hydroxymethyltransferase from Methanosarcina acetivorans (strain ATCC 35395 / DSM 2834 / JCM 12185 / C2A).